A 551-amino-acid chain; its full sequence is Putative ABC transporter ATP-binding protein BA_3364/GBAA_3364/BAS3118 (551 aa).

2 ABC transporter domains span residues 5-243 (AEIK…FRPF) and 293-525 (LSAE…SINR). ATP is bound by residues 39–46 (GGSGSGKT) and 327–334 (GKNGTGKS).

The protein belongs to the ABC transporter superfamily.

It is found in the cell membrane. Its function is as follows. Probably part of an ABC transporter complex. Responsible for energy coupling to the transport system. The chain is Putative ABC transporter ATP-binding protein BA_3364/GBAA_3364/BAS3118 from Bacillus anthracis.